A 62-amino-acid polypeptide reads, in one-letter code: Large ribosomal subunit protein bL28 (62 aa).

This sequence belongs to the bacterial ribosomal protein bL28 family.

The protein is Large ribosomal subunit protein bL28 of Aster yellows witches'-broom phytoplasma (strain AYWB).